Reading from the N-terminus, the 40-residue chain is Ostricacin-3 (40 aa).

3 cysteine pairs are disulfide-bonded: Cys8–Cys36, Cys15–Cys30, and Cys20–Cys37.

Its subcellular location is the secreted. Functionally, has antibacterial activity against the Gram-positive bacterium S.aureus 1056 MRSA (MIC=2.78 ug/ml) and the Gram-negative bacterium E.coli O157:H7 (MIC=2.41 ug/ml). Does not have antifungal activity against the yeast C.albicans 3153A. The sequence is that of Ostricacin-3 from Struthio camelus (Common ostrich).